We begin with the raw amino-acid sequence, 980 residues long: BEM1-interacting protein 1 (980 aa).

An SH3 domain is found at 13 to 77 (KSFPLYIAVN…PAVFTKRIAI (65 aa)). 3 positions are modified to phosphoserine: Ser-104, Ser-106, and Ser-128. The disordered stretch occupies residues 139–163 (SGSVEQEVSKSPTRVPEVSTPQLQD). The span at 141–150 (SVEQEVSKSP) shows a compositional bias: polar residues. 2 positions are modified to phosphothreonine: Thr-151 and Thr-158. Residue Ser-209 is modified to Phosphoserine. The region spanning 228 to 292 (WSPEEVTDYF…FKEIRNIKSA (65 aa)) is the SAM domain. Disordered regions lie at residues 333 to 356 (SKCN…ELQR) and 390 to 438 (IFES…KNKN). Phosphoserine occurs at positions 393 and 412. The segment covering 397 to 412 (APKPPSYPSPVQPPQS) has biased composition (pro residues). Residues 415-438 (FNNRYTNNNARFPPQTTYPPKNKN) show a composition bias toward polar residues. Phosphoserine occurs at positions 525 and 528. Residues 544-762 (SSFDEEETKQ…AKKQQTSAFT (219 aa)) are disordered. Residues 573 to 582 (HSRDASLSEM) are compositionally biased toward basic and acidic residues. 3 positions are modified to phosphoserine: Ser-589, Ser-590, and Ser-593. Composition is skewed to low complexity over residues 589–608 (SSIL…SPTK) and 621–638 (HSRS…QSYS). Phosphoserine is present on residues Ser-644 and Ser-655. Polar residues-rich tracts occupy residues 645-662 (LVTS…SKSN) and 669-683 (ETPT…VSQP). Basic residues predominate over residues 687-703 (KHKHKHKHKSKHKHKNS). At Ser-735 the chain carries Phosphoserine. Over residues 737 to 746 (SELTQKSTKS) the composition is skewed to polar residues. Residues 776–895 (TADCSGWMSK…WLSAIIKATI (120 aa)) form the PH domain. Thr-919 carries the post-translational modification Phosphothreonine. The tract at residues 930–980 (LRDAEEEEGRDQFGWDDTQNKRNSNYPIEQDQFETSDYLESSAFEYPGGRL) is disordered. Residues 950–968 (KRNSNYPIEQDQFETSDYL) are compositionally biased toward polar residues.

As to quaternary structure, interacts with BEM1.

The protein localises to the bud. Its subcellular location is the bud neck. Functions redundantly with BOI2 to promote the fusion of secretory vesicles with the plasma membrane at sites of polarized growth. This Saccharomyces cerevisiae (strain ATCC 204508 / S288c) (Baker's yeast) protein is BEM1-interacting protein 1.